A 411-amino-acid chain; its full sequence is GTPase Obg (411 aa).

In terms of domain architecture, Obg spans 1 to 157; that stretch reads MQFIDEARFV…REIRLELRVL (157 aa). The disordered stretch occupies residues 20 to 45; the sequence is AVSFHREKYRPRGGPDGGRGGDGGSV. The segment covering 33 to 43 has biased composition (gly residues); sequence GPDGGRGGDGG. Residues 158–330 form the OBG-type G domain; sequence SDVGLVGLPN…LERSAEAAPR (173 aa). Residues 164 to 171, 189 to 193, 212 to 215, 276 to 279, and 311 to 313 each bind GTP; these read GLPNAGKS, FTTLT, DIPG, NKVD, and ARL. Positions 171 and 191 each coordinate Mg(2+). The OCT domain maps to 335–411; that stretch reads VFRPSWRGLR…RIGDVSFEFR (77 aa).

It belongs to the TRAFAC class OBG-HflX-like GTPase superfamily. OBG GTPase family. As to quaternary structure, monomer. Mg(2+) is required as a cofactor.

Its subcellular location is the cytoplasm. In terms of biological role, an essential GTPase which binds GTP, GDP and possibly (p)ppGpp with moderate affinity, with high nucleotide exchange rates and a fairly low GTP hydrolysis rate. Plays a role in control of the cell cycle, stress response, ribosome biogenesis and in those bacteria that undergo differentiation, in morphogenesis control. This chain is GTPase Obg, found in Rubrobacter xylanophilus (strain DSM 9941 / JCM 11954 / NBRC 16129 / PRD-1).